A 575-amino-acid polypeptide reads, in one-letter code: Carboxylesterase 5A (575 aa).

The N-terminal stretch at 1–28 is a signal peptide; the sequence is MSGDWVRPGQALIWVIWIFGAIIEGSVT. An intrachain disulfide couples cysteine 94 to cysteine 121. The N-linked (GlcNAc...) asparagine glycan is linked to asparagine 134. Serine 226 functions as the Acyl-ester intermediate in the catalytic mechanism. Cysteine 280 and cysteine 291 form a disulfide bridge. The N-linked (GlcNAc...) asparagine glycan is linked to asparagine 281. The Charge relay system role is filled by glutamate 345. The N-linked (GlcNAc...) asparagine glycan is linked to asparagine 363. The Charge relay system role is filled by histidine 454. Asparagine 524 is a glycosylation site (N-linked (GlcNAc...) asparagine).

Belongs to the type-B carboxylesterase/lipase family. N-glycosylated.

It localises to the secreted. It catalyses the reaction a carboxylic ester + H2O = an alcohol + a carboxylate + H(+). Functionally, involved in the detoxification of xenobiotics and in the activation of ester and amide prodrugs. The polypeptide is Carboxylesterase 5A (Ces5a) (Mus musculus (Mouse)).